Here is a 183-residue protein sequence, read N- to C-terminus: UPF0302 protein BH1670 (183 aa).

The protein belongs to the UPF0302 family.

The polypeptide is UPF0302 protein BH1670 (Halalkalibacterium halodurans (strain ATCC BAA-125 / DSM 18197 / FERM 7344 / JCM 9153 / C-125) (Bacillus halodurans)).